The following is a 111-amino-acid chain: Putative pterin-4-alpha-carbinolamine dehydratase (111 aa).

Belongs to the pterin-4-alpha-carbinolamine dehydratase family.

The catalysed reaction is (4aS,6R)-4a-hydroxy-L-erythro-5,6,7,8-tetrahydrobiopterin = (6R)-L-erythro-6,7-dihydrobiopterin + H2O. This Alkaliphilus metalliredigens (strain QYMF) protein is Putative pterin-4-alpha-carbinolamine dehydratase.